The primary structure comprises 425 residues: Ribulose bisphosphate carboxylase (425 aa).

The active-site Proton acceptor is K153. Residue K155 coordinates substrate. Residues K179, D181, and E182 each contribute to the Mg(2+) site. K179 carries the N6-carboxylysine modification. H269 functions as the Proton acceptor in the catalytic mechanism. Substrate-binding positions include R270, H302, 353-355 (SGG), and 375-378 (QAGG).

The protein belongs to the RuBisCO large chain family. Type III subfamily. Homodimer. In contrast to form I RuBisCO, the form III RuBisCO is composed solely of large subunits. Mg(2+) is required as a cofactor.

The catalysed reaction is 2 (2R)-3-phosphoglycerate + 2 H(+) = D-ribulose 1,5-bisphosphate + CO2 + H2O. It catalyses the reaction D-ribulose 1,5-bisphosphate + O2 = 2-phosphoglycolate + (2R)-3-phosphoglycerate + 2 H(+). Reversibly inhibited by O(2). Its function is as follows. Catalyzes the addition of molecular CO(2) and H(2)O to ribulose 1,5-bisphosphate (RuBP), generating two molecules of 3-phosphoglycerate (3-PGA). Functions in an archaeal AMP degradation pathway, together with AMP phosphorylase and R15P isomerase. This Methanocaldococcus jannaschii (strain ATCC 43067 / DSM 2661 / JAL-1 / JCM 10045 / NBRC 100440) (Methanococcus jannaschii) protein is Ribulose bisphosphate carboxylase.